The following is a 229-amino-acid chain: Clathrin light chain B (229 aa).

2 stretches are compositionally biased toward low complexity: residues 1 to 17 (MAED…GAPE) and 45 to 58 (GAPA…AQPG). Residues 1-70 (MAEDFGFFSS…SGAGSEDMST (70 aa)) form a disordered region. S11 and S13 each carry phosphoserine. Residues 93–155 (ADRLTQEPES…QVEKNKINNR (63 aa)) form an involved in binding clathrin heavy chain region. Phosphothreonine is present on T187. C199 and C209 are joined by a disulfide. At K204 the chain carries N6-acetyllysine. At S217 the chain carries Phosphoserine.

This sequence belongs to the clathrin light chain family. In terms of assembly, clathrin coats are formed from molecules containing 3 heavy chains and 3 light chains. Interacts (via N-terminus) with HIP1. Interacts with HIP1R.

The protein localises to the cytoplasmic vesicle membrane. It is found in the membrane. The protein resides in the coated pit. In terms of biological role, clathrin is the major protein of the polyhedral coat of coated pits and vesicles. This Mus musculus (Mouse) protein is Clathrin light chain B (Cltb).